The sequence spans 157 residues: Putative pre-16S rRNA nuclease (157 aa).

The protein belongs to the YqgF nuclease family.

It localises to the cytoplasm. Its function is as follows. Could be a nuclease involved in processing of the 5'-end of pre-16S rRNA. The protein is Putative pre-16S rRNA nuclease of Anaplasma marginale (strain St. Maries).